Here is a 140-residue protein sequence, read N- to C-terminus: Histone H2B (140 aa).

Positions 1–10 are enriched in basic and acidic residues; it reads MPPKAAEKKP. The segment at 1 to 48 is disordered; it reads MPPKAAEKKPTTGGKAPAGKAPAEKKEAGKKTAAAASGDKKKRGKTRK. Residues lysine 8 and lysine 9 each carry the N6-acetyllysine; alternate modification. Glycyl lysine isopeptide (Lys-Gly) (interchain with G-Cter in SUMO); alternate cross-links involve residues lysine 8 and lysine 9. Positions 11–21 are enriched in low complexity; it reads TTGGKAPAGKA. At lysine 15 the chain carries N6-acetyllysine. Lysine 25 bears the N6-acetyllysine; alternate mark. Lysine 25 participates in a covalent cross-link: Glycyl lysine isopeptide (Lys-Gly) (interchain with G-Cter in SUMO); alternate. Lysine 26 participates in a covalent cross-link: Glycyl lysine isopeptide (Lys-Gly) (interchain with G-Cter in SUMO). Lysine 134 participates in a covalent cross-link: Glycyl lysine isopeptide (Lys-Gly) (interchain with G-Cter in ubiquitin).

It belongs to the histone H2B family. As to quaternary structure, the nucleosome is a histone octamer containing two molecules each of H2A, H2B, H3 and H4 assembled in one H3-H4 heterotetramer and two H2A-H2B heterodimers. The octamer wraps approximately 147 bp of DNA. In terms of processing, monoubiquitinated by the ubc2-bre1 complex to form H2BK123ub1. H2BK123ub1 gives a specific tag for epigenetic transcriptional activation and is also prerequisite for H3K4me and H3K79me formation. H2BK123ub1 also modulates the formation of double-strand breaks during meiosis and is a prerequisite for DNA-damage checkpoint activation. Post-translationally, acetylated by gcn5 to form H2BK11ac and H2BK16ac. H2BK16ac can also be formed by esa1. Acetylation of N-terminal lysines and particularly formation of H2BK11acK16ac has a positive effect on transcription. Sumoylation to form H2BK6su or H2BK7su, and probably also H2BK16su or H2BK17su, occurs preferentially near the telomeres and represses gene transcription.

The protein localises to the nucleus. Its subcellular location is the chromosome. Functionally, core component of nucleosome. Nucleosomes wrap and compact DNA into chromatin, limiting DNA accessibility to the cellular machineries which require DNA as a template. Histones thereby play a central role in transcription regulation, DNA repair, DNA replication and chromosomal stability. DNA accessibility is regulated via a complex set of post-translational modifications of histones, also called histone code, and nucleosome remodeling. This is Histone H2B (htb1) from Aspergillus terreus (strain NIH 2624 / FGSC A1156).